Consider the following 84-residue polypeptide: MAKSNKRRPAPEKPVKTRKCVFCAKKDQAIDYKDTALLRTYISERGKIRARRVTGNCVQHQRDIALAVKNAREVALLPFTSSAR.

Belongs to the bacterial ribosomal protein bS18 family. Part of the 30S ribosomal subunit. Forms a tight heterodimer with protein bS6.

Its function is as follows. Binds as a heterodimer with protein bS6 to the central domain of the 16S rRNA, where it helps stabilize the platform of the 30S subunit. This chain is Small ribosomal subunit protein bS18A, found in Mycobacterium marinum (strain ATCC BAA-535 / M).